The chain runs to 423 residues: Serine--tRNA ligase (423 aa).

231–233 is an L-serine binding site; it reads TAE. 262–264 contacts ATP; sequence RSE. Residue Glu-285 coordinates L-serine. Residue 349-352 participates in ATP binding; that stretch reads EISS. An L-serine-binding site is contributed by Ser-384.

The protein belongs to the class-II aminoacyl-tRNA synthetase family. Type-1 seryl-tRNA synthetase subfamily. In terms of assembly, homodimer. The tRNA molecule binds across the dimer.

The protein localises to the cytoplasm. It catalyses the reaction tRNA(Ser) + L-serine + ATP = L-seryl-tRNA(Ser) + AMP + diphosphate + H(+). The enzyme catalyses tRNA(Sec) + L-serine + ATP = L-seryl-tRNA(Sec) + AMP + diphosphate + H(+). The protein operates within aminoacyl-tRNA biosynthesis; selenocysteinyl-tRNA(Sec) biosynthesis; L-seryl-tRNA(Sec) from L-serine and tRNA(Sec): step 1/1. In terms of biological role, catalyzes the attachment of serine to tRNA(Ser). Is also able to aminoacylate tRNA(Sec) with serine, to form the misacylated tRNA L-seryl-tRNA(Sec), which will be further converted into selenocysteinyl-tRNA(Sec). This Lactococcus lactis subsp. cremoris (strain MG1363) protein is Serine--tRNA ligase.